A 363-amino-acid polypeptide reads, in one-letter code: Diheme-cytochrome-encapsulin shell fusion protein (363 aa).

The first 36 residues, 1-36, serve as a signal peptide directing secretion; sequence MVMGILNTFKKVYAVTGFFALLAVFSLSQVGSSAFA. Positions 37 to 74 are diheme c-type cytochrome; it reads ACAKVDDCFSCHTTQELNAVHKNTPYQGQSCIVCHKAF. Heme-binding residues include cysteine 44, cysteine 47, histidine 48, cysteine 67, cysteine 70, and histidine 71. The interval 75-94 is linker; the sequence is AADDTCSDAKDGRFAKISSE. Positions 95-363 are encapsulin domain; sequence ININKEDWNK…KCPQAICTLE (269 aa).

The protein belongs to the encapsulin family. Family 1 subfamily. As to quaternary structure, the encapsulin nanocompartment is probably formed by 180 monomers, with the N-terminus (diheme domain) inside. There are 36 pores where the pentamers meet as well as 3-fold axis channels and dimer channels. Requires heme as cofactor.

The protein localises to the encapsulin nanocompartment. In terms of biological role, fusion of the shell and cargo protein of a type 1 encapsulin nanocompartment. Protein missing its signal peptide makes 33 nm particles in E.coli (called cEnc), protein missing its signal peptide and diheme domain (residues 1-86, called Enc) makes 29 nm particles. The cEnc nancompartment encloses c-type heme. The cargo protein NIR-HAO (AC P0DV45) is probably targeted to the nanocompartment by its association with the diheme domain in cEnc; removal of the diheme domain in Enc halves the amount of cargo. This chain is Diheme-cytochrome-encapsulin shell fusion protein, found in Kuenenia stuttgartiensis.